The chain runs to 717 residues: Fatty acid oxidation complex subunit alpha (717 aa).

Residues 1-190 (MIHAGNAITV…KDGAVDAVVA (190 aa)) form an enoyl-CoA hydratase/isomerase region. Asp-298 is a binding site for substrate. Residues 313 to 717 (HPVNQAAVLG…MAANNKKFYG (405 aa)) form a 3-hydroxyacyl-CoA dehydrogenase region. NAD(+) contacts are provided by residues Met-326, Asp-345, 402–404 (VTE), Lys-409, and Ser-431. His-452 functions as the For 3-hydroxyacyl-CoA dehydrogenase activity in the catalytic mechanism. Asn-455 contributes to the NAD(+) binding site. Substrate is bound at residue Asn-502.

This sequence in the N-terminal section; belongs to the enoyl-CoA hydratase/isomerase family. It in the C-terminal section; belongs to the 3-hydroxyacyl-CoA dehydrogenase family. In terms of assembly, heterotetramer of two alpha chains (FadB) and two beta chains (FadA).

The enzyme catalyses a (3S)-3-hydroxyacyl-CoA + NAD(+) = a 3-oxoacyl-CoA + NADH + H(+). It carries out the reaction a (3S)-3-hydroxyacyl-CoA = a (2E)-enoyl-CoA + H2O. The catalysed reaction is a 4-saturated-(3S)-3-hydroxyacyl-CoA = a (3E)-enoyl-CoA + H2O. It catalyses the reaction (3S)-3-hydroxybutanoyl-CoA = (3R)-3-hydroxybutanoyl-CoA. The enzyme catalyses a (3Z)-enoyl-CoA = a 4-saturated (2E)-enoyl-CoA. It carries out the reaction a (3E)-enoyl-CoA = a 4-saturated (2E)-enoyl-CoA. The protein operates within lipid metabolism; fatty acid beta-oxidation. Functionally, involved in the aerobic and anaerobic degradation of long-chain fatty acids via beta-oxidation cycle. Catalyzes the formation of 3-oxoacyl-CoA from enoyl-CoA via L-3-hydroxyacyl-CoA. It can also use D-3-hydroxyacyl-CoA and cis-3-enoyl-CoA as substrate. This is Fatty acid oxidation complex subunit alpha from Acinetobacter baumannii (strain AB307-0294).